Consider the following 791-residue polypeptide: Protein SEY1 (791 aa).

Residues 1-685 (MSEDGASKCQ…KRSTIKSHTH (685 aa)) are Cytoplasmic-facing. In terms of domain architecture, GB1/RHD3-type G spans 40-268 (GLDYHVISVF…REDYYLSGKY (229 aa)). 50 to 57 (GSQSSGKS) lines the GTP pocket. The chain crosses the membrane as a helical span at residues 686 to 706 (IPMWIYAIIAVLGWNEFMLVL). At 707 to 709 (RNP) the chain is on the lumenal side. A helical transmembrane segment spans residues 710 to 730 (LFIALMLLIVGAAYTVHRLNL). Over 731-791 (WTPLATFASA…NETKENANES (61 aa)) the chain is Cytoplasmic. Residues 763–791 (PKNASSKPVESFEMQDLSVNETKENANES) are disordered.

Belongs to the TRAFAC class dynamin-like GTPase superfamily. GB1/RHD3 GTPase family. RHD3 subfamily.

Its subcellular location is the endoplasmic reticulum membrane. Cooperates with the reticulon proteins and tubule-shaping DP1 family proteins to generate and maintain the structure of the tubular endoplasmic reticulum network. Has GTPase activity, which is required for its function in ER organization. This is Protein SEY1 from Eremothecium gossypii (strain ATCC 10895 / CBS 109.51 / FGSC 9923 / NRRL Y-1056) (Yeast).